Reading from the N-terminus, the 416-residue chain is MATIEDGTSEDRVANDEYKIWKKNTPFLYDLVMTHALEWPSLSVQWLPEIEKESSDHTVHRLILGTHTSDEQNHLLISKICMPTDEAQFDASRYDTERGEFGGFGAVNGKVEPDIRINHEGEVNRARYMPQKPTIIATKSPSADVYIFDYTKYPSVPKDNTFNPLLKLKGHTKEGYGLSWNPNKEGLILSASDDQTVCHWDINGNAGANGELKAREIFKGHESVVEDVAWHVLHDGVFGSVGDDKKLLIWDLRTNVPGHAIDAHSAEVNCLAFNPYSEFILATGSADKTVALWDLRNLRLKLHSFESHRDEIFQVQWSPHNETILASSGTDKRLHVWDLSKIGEDQTAEDAEDGPPELLFIHGGHTAKISDFSWNPNEPWVVCSVSEDNILQVWQMADNIYNDVEDETPADMVERS.

WD repeat units follow at residues 118–158 (NHEG…SVPK), 170–210 (GHTK…GANG), 220–260 (GHES…PGHA), 263–303 (AHSA…LKLH), 307–347 (SHRD…EDQT), and 364–404 (GHTA…YNDV).

The protein belongs to the WD repeat RBAP46/RBAP48/MSI1 family. Binds directly to helix 1 of the histone fold of histone H4, a region that is not accessible when H4 is in chromatin. Probable component of a NuRD-like complex, composed of at least lin-53 and hda-1. Interacts with lin-35. Interacts with hda-1; the interaction is direct. Component of the DRM complex, at least composed of lin-9, lin-35, lin-37, lin-52, lin-53, lin-54- dpl-1 and efl-1. Interacts with hcp-3.

Its subcellular location is the nucleus. It is found in the chromosome. It localises to the centromere. Core histone-binding subunit that may target chromatin assembly factors, chromatin remodeling factors and histone deacetylases to their histone substrates in a manner that is regulated by nucleosomal DNA. Required for hcp-3 and his-1 stabilization, localization of hcp-3 to centromeres and for proper chromosome segregation. Synthetic multivulva class B (synMuvB) protein. SynMuvB proteins are required to repress the induction of vulval development by Ras signaling and probably act by forming the multiprotein DRM complex that represses transcription. The sequence is that of Probable histone-binding protein lin-53 from Caenorhabditis briggsae.